The sequence spans 173 residues: UPF0598 protein F59C6.12 (173 aa).

The protein belongs to the UPF0598 family.

This chain is UPF0598 protein F59C6.12, found in Caenorhabditis elegans.